A 416-amino-acid polypeptide reads, in one-letter code: Pigment epithelium-derived factor (416 aa).

The N-terminal stretch at 1-20 (MQALVLLLWTGALLGFGRCQ) is a signal peptide. 2 positions are modified to phosphoserine: S112 and S225. The N-linked (GlcNAc...) asparagine glycan is linked to N283.

It belongs to the serpin family. In terms of assembly, interacts with PNPLA2; this interaction stimulates the phospholipase A2 activity of PNPLA2. In terms of tissue distribution, retinal pigment epithelial cells. Located in the interphotoreceptor matrix (IPM) which is between the retinal pigment epithelium and the neural retina.

The protein resides in the secreted. It is found in the melanosome. Neurotrophic protein; induces extensive neuronal differentiation in retinoblastoma cells. Potent inhibitor of angiogenesis. As it does not undergo the S (stressed) to R (relaxed) conformational transition characteristic of active serpins, it exhibits no serine protease inhibitory activity. The sequence is that of Pigment epithelium-derived factor (SERPINF1) from Bos taurus (Bovine).